The chain runs to 157 residues: 2-C-methyl-D-erythritol 2,4-cyclodiphosphate synthase (157 aa).

A divalent metal cation contacts are provided by Asp-8 and His-10. Residues 8–10 (DVH) and 34–35 (HS) contribute to the 4-CDP-2-C-methyl-D-erythritol 2-phosphate site. Residue His-42 participates in a divalent metal cation binding. Residues 56–58 (DIG), 61–65 (FPDTD), 100–106 (AQAPKML), 132–135 (TTTE), Phe-139, and Arg-142 contribute to the 4-CDP-2-C-methyl-D-erythritol 2-phosphate site.

It belongs to the IspF family. Homotrimer. A divalent metal cation serves as cofactor.

The catalysed reaction is 4-CDP-2-C-methyl-D-erythritol 2-phosphate = 2-C-methyl-D-erythritol 2,4-cyclic diphosphate + CMP. Its pathway is isoprenoid biosynthesis; isopentenyl diphosphate biosynthesis via DXP pathway; isopentenyl diphosphate from 1-deoxy-D-xylulose 5-phosphate: step 4/6. Functionally, involved in the biosynthesis of isopentenyl diphosphate (IPP) and dimethylallyl diphosphate (DMAPP), two major building blocks of isoprenoid compounds. Catalyzes the conversion of 4-diphosphocytidyl-2-C-methyl-D-erythritol 2-phosphate (CDP-ME2P) to 2-C-methyl-D-erythritol 2,4-cyclodiphosphate (ME-CPP) with a corresponding release of cytidine 5-monophosphate (CMP). The protein is 2-C-methyl-D-erythritol 2,4-cyclodiphosphate synthase of Erwinia tasmaniensis (strain DSM 17950 / CFBP 7177 / CIP 109463 / NCPPB 4357 / Et1/99).